An 82-amino-acid chain; its full sequence is U24 protein (82 aa).

The PPXY motif signature appears at P7–Y10. Residues F52–I72 form a helical membrane-spanning segment.

Interacts with host ITCH; this interaction probably mediates ITCH degradation. Interacts probably with NEDD4.

It is found in the membrane. Down-regulates of the TCR/CD3E complex and the transferrin receptor TFRC in host T-cells by blocking them from recycling back to the cell surface. In Homo sapiens (Human), this protein is U24 protein.